The sequence spans 418 residues: ATP phosphoribosyltransferase regulatory subunit (418 aa).

The protein belongs to the class-II aminoacyl-tRNA synthetase family. HisZ subfamily. Heteromultimer composed of HisG and HisZ subunits.

Its subcellular location is the cytoplasm. Its pathway is amino-acid biosynthesis; L-histidine biosynthesis; L-histidine from 5-phospho-alpha-D-ribose 1-diphosphate: step 1/9. Its function is as follows. Required for the first step of histidine biosynthesis. May allow the feedback regulation of ATP phosphoribosyltransferase activity by histidine. The chain is ATP phosphoribosyltransferase regulatory subunit from Halothermothrix orenii (strain H 168 / OCM 544 / DSM 9562).